We begin with the raw amino-acid sequence, 159 residues long: UPF0262 protein Dshi_0980 (159 aa).

It belongs to the UPF0262 family.

This chain is UPF0262 protein Dshi_0980, found in Dinoroseobacter shibae (strain DSM 16493 / NCIMB 14021 / DFL 12).